Reading from the N-terminus, the 319-residue chain is Tetrahydromethanopterin S-methyltransferase subunit H (319 aa).

This sequence belongs to the MtrH family. The complex is composed of 8 subunits; MtrA, MtrB, MtrC, MtrD, MtrE, MtrF, MtrG and MtrH.

The catalysed reaction is 5-methyl-5,6,7,8-tetrahydromethanopterin + coenzyme M + 2 Na(+)(in) = 5,6,7,8-tetrahydromethanopterin + methyl-coenzyme M + 2 Na(+)(out). The protein operates within one-carbon metabolism; methanogenesis from CO(2); methyl-coenzyme M from 5,10-methylene-5,6,7,8-tetrahydromethanopterin: step 2/2. Its function is as follows. Part of a complex that catalyzes the formation of methyl-coenzyme M and tetrahydromethanopterin from coenzyme M and methyl-tetrahydromethanopterin. This is an energy-conserving, sodium-ion translocating step. MtrH catalyzes the transfer of the methyl group from methyl-tetrahydromethanopterin to the corrinoid prosthetic group of MtrA. The protein is Tetrahydromethanopterin S-methyltransferase subunit H of Methanococcus vannielii (strain ATCC 35089 / DSM 1224 / JCM 13029 / OCM 148 / SB).